We begin with the raw amino-acid sequence, 330 residues long: Probable NAD(P)H-dependent D-xylose reductase xyl1 (330 aa).

The Proton donor role is filled by Tyr-50. Position 112 (His-112) interacts with substrate. NAD(+)-binding positions include 166–167, 215–224, and 271–281; these read SN, SSFGPLSFLE, and KSNNPTRLAQN.

Belongs to the aldo/keto reductase family.

The enzyme catalyses xylitol + NAD(+) = D-xylose + NADH + H(+). It carries out the reaction xylitol + NADP(+) = D-xylose + NADPH + H(+). It participates in carbohydrate metabolism; D-xylose degradation. Catalyzes the initial reaction in the xylose utilization pathway by reducing D-xylose into xylitol. Xylose is a major component of hemicelluloses such as xylan. Most fungi utilize D-xylose via three enzymatic reactions, xylose reductase (XR), xylitol dehydrogenase (XDH), and xylulokinase, to form xylulose 5-phosphate, which enters pentose phosphate pathway. The protein is Probable NAD(P)H-dependent D-xylose reductase xyl1 (xyl1) of Aspergillus clavatus (strain ATCC 1007 / CBS 513.65 / DSM 816 / NCTC 3887 / NRRL 1 / QM 1276 / 107).